A 92-amino-acid chain; its full sequence is Probable Fe(2+)-trafficking protein (92 aa).

The protein belongs to the Fe(2+)-trafficking protein family.

Could be a mediator in iron transactions between iron acquisition and iron-requiring processes, such as synthesis and/or repair of Fe-S clusters in biosynthetic enzymes. The chain is Probable Fe(2+)-trafficking protein from Anaeromyxobacter sp. (strain Fw109-5).